Here is a 294-residue protein sequence, read N- to C-terminus: tRNA dimethylallyltransferase (294 aa).

10–17 is an ATP binding site; it reads GPTAVGKT. Residue 12–17 coordinates substrate; that stretch reads TAVGKT. Positions 35–38 are interaction with substrate tRNA; that stretch reads DSQQ.

Belongs to the IPP transferase family. As to quaternary structure, monomer. It depends on Mg(2+) as a cofactor.

The catalysed reaction is adenosine(37) in tRNA + dimethylallyl diphosphate = N(6)-dimethylallyladenosine(37) in tRNA + diphosphate. Catalyzes the transfer of a dimethylallyl group onto the adenine at position 37 in tRNAs that read codons beginning with uridine, leading to the formation of N6-(dimethylallyl)adenosine (i(6)A). In Streptococcus pneumoniae (strain ATCC 700669 / Spain 23F-1), this protein is tRNA dimethylallyltransferase.